Reading from the N-terminus, the 511-residue chain is GMP synthase [glutamine-hydrolyzing] (511 aa).

In terms of domain architecture, Glutamine amidotransferase type-1 spans 5–195 (AILVLDFGSQ…VFKICQAQIN (191 aa)). The active-site Nucleophile is C82. Catalysis depends on residues H169 and E171. A GMPS ATP-PPase domain is found at 196–386 (WSLEGNLETI…LGIKKESLYR (191 aa)). 223 to 229 (SGGTDSL) serves as a coordination point for ATP.

In terms of assembly, homodimer.

It catalyses the reaction XMP + L-glutamine + ATP + H2O = GMP + L-glutamate + AMP + diphosphate + 2 H(+). Its pathway is purine metabolism; GMP biosynthesis; GMP from XMP (L-Gln route): step 1/1. Catalyzes the synthesis of GMP from XMP. In Borreliella burgdorferi (strain ATCC 35210 / DSM 4680 / CIP 102532 / B31) (Borrelia burgdorferi), this protein is GMP synthase [glutamine-hydrolyzing] (guaA).